Here is a 445-residue protein sequence, read N- to C-terminus: Coronin-A (445 aa).

WD repeat units follow at residues 77-117 (GHKS…LTDS), 127-167 (GHKR…NLTT), 170-209 (GHSD…IVNE), and 259-299 (DSAS…PYIH). Positions 410-444 (KNEKELREEYEKLKIRVAYLESEIVKKDAKIKELT) form a coiled coil.

It belongs to the WD repeat coronin family. Binds to F-actin.

It localises to the cell surface. Its function is as follows. Required for normal motility. Participates in cytokinesis. In Dictyostelium discoideum (Social amoeba), this protein is Coronin-A (corA).